The following is a 529-amino-acid chain: Peptide chain release factor 3 (529 aa).

The region spanning 11–280 is the tr-type G domain; that stretch reads AKRRTFAIIS…GLVAWAPAPM (270 aa). GTP-binding positions include 20–27, 88–92, and 142–145; these read SHPDAGKT, DTPGH, and NKLD.

The protein belongs to the TRAFAC class translation factor GTPase superfamily. Classic translation factor GTPase family. PrfC subfamily.

The protein localises to the cytoplasm. In terms of biological role, increases the formation of ribosomal termination complexes and stimulates activities of RF-1 and RF-2. It binds guanine nucleotides and has strong preference for UGA stop codons. It may interact directly with the ribosome. The stimulation of RF-1 and RF-2 is significantly reduced by GTP and GDP, but not by GMP. This Salmonella typhi protein is Peptide chain release factor 3 (prfC).